The following is an 839-amino-acid chain: Septin-interacting protein 1 (839 aa).

Residues 22–164 (INRPRGRQSR…ASERNVGAWE (143 aa)) are disordered. Phosphoserine occurs at positions 43 and 47. Thr53 bears the Phosphothreonine mark. The segment covering 88 to 101 (LQADDEKGSQKEGA) has biased composition (basic and acidic residues). The span at 102-111 (EADQGEESDD) shows a compositional bias: acidic residues. Positions 140–149 (SRKQPSTTFQ) are enriched in polar residues. Positions 167–213 (TRGIGAKLLLQMGYEPGKGLGKDLQGISHPVQAHVRKGRGAIGAYGP) constitute a G-patch domain. Positions 363–411 (IDNQERECSSQQAALESEHRKLEEIVQLERNHIRTLEESLERVERLIDN) form a coiled coil.

This sequence belongs to the TFP11/STIP family. In terms of assembly, identified in the spliceosome C complex. Interacts with pnut.

It localises to the nucleus. Functionally, may be involved in pre-mRNA splicing. In Drosophila melanogaster (Fruit fly), this protein is Septin-interacting protein 1 (sip1).